We begin with the raw amino-acid sequence, 163 residues long: uncharacterized protein (163 aa).

This sequence belongs to the LcrH/SycD chaperone family.

This is an uncharacterized protein from Escherichia coli (strain K12).